Here is a 266-residue protein sequence, read N- to C-terminus: MSEQSSKYIAALLAVLSISMVLGIDLFIFSLQSEKQTMPHLGVGVLVAQLISLLVFYRGEICPGQRGRLIKVNMTFAIYWAVWLLISLLQNNHTLTNVMSVCGLSVVYFIWKQPKTEKIRNSFLLMAALIAGLGCLSYLMIFTELPASDFAEYNPFAPILSGVILANLVLVIARNRLQGFIALLPLAMIILLALNALAMFLFLLLNGMESAVNSESVFAYIIYFVCHFVIAAILILHSFQKWTLSTNSLFILLFIAVCLPLWMVFV.

8 helical membrane passes run 9-29, 37-57, 69-89, 123-143, 153-173, 184-204, 216-236, and 246-266; these read IAAL…LFIF, TMPH…LVFY, LIKV…ISLL, FLLM…MIFT, YNPF…LVIA, LPLA…LFLL, SVFA…ILIL, and TNSL…MVFV.

Its subcellular location is the cell membrane. This is an uncharacterized protein from Haemophilus influenzae (strain ATCC 51907 / DSM 11121 / KW20 / Rd).